A 1031-amino-acid chain; its full sequence is Zinc finger protein 445 (1031 aa).

The disordered stretch occupies residues 1-43; sequence MPPGRWHAAYPAQAQSSRERGRLQTVKKEEEDESYTPVQAARP. Residues 17-29 are compositionally biased toward basic and acidic residues; it reads SRERGRLQTVKKE. Lys28 is covalently cross-linked (Glycyl lysine isopeptide (Lys-Gly) (interchain with G-Cter in SUMO1)). Residues 55–137 form the SCAN box domain; that stretch reads RQLFRQLRYH…ALLEELQRDL (83 aa). The region spanning 234 to 304 is the KRAB domain; the sequence is MTFKDVEVTF…NMQAAQPKGN (71 aa). Glycyl lysine isopeptide (Lys-Gly) (interchain with G-Cter in SUMO2) cross-links involve residues Lys317, Lys374, Lys375, and Lys399. C2H2-type zinc fingers lie at residues 485–507, 513–535, and 541–563; these read FKCSDCGRTFSHSSHLAYHQRLH, FKCRVCGKAFRWSSNCARHEKIH, and YKCDLCEKAFRRLSAYRLHRETH. Lys567 participates in a covalent cross-link: Glycyl lysine isopeptide (Lys-Gly) (interchain with G-Cter in SUMO2). 2 consecutive C2H2-type zinc fingers follow at residues 597-619 and 625-647; these read FDCSQCRKSFHCKSYVLEHQRIH and YKCTKCRKTFRWRSNFTRHMRLH. A Glycyl lysine isopeptide (Lys-Gly) (interchain with G-Cter in SUMO2) cross-link involves residue Lys654. C2H2-type zinc fingers lie at residues 681–703 and 709–731; these read FLCQQCGKTFTRKKTLVDHQRIH and YQCSDCGKDFAYRSAFIVHKKKH. Glycyl lysine isopeptide (Lys-Gly) (interchain with G-Cter in SUMO2) cross-links involve residues Lys736 and Lys758. C2H2-type zinc fingers lie at residues 762–784, 790–812, 840–862, 868–890, and 896–918; these read YKCSQCGKAFRNHSFLLIHQRVH, YKCRECGKAFRWSSNLYRHQRIH, FWCQECGKTFTRKRTLLDHKGIH, YKCNLCGKSYDRNYRLVNHQRIH, and FKCQWCGKEFIGRHTLSSHQRKH. The disordered stretch occupies residues 911-939; sequence LSSHQRKHTRAAQAERSPPARSSSQDTKL. Glycyl lysine isopeptide (Lys-Gly) (interchain with G-Cter in SUMO2) cross-links involve residues Lys938, Lys956, and Lys975. C2H2-type zinc fingers lie at residues 978 to 1000 and 1006 to 1028; these read HKCSICGKTFNKSSQLISHKRFH and FKCSKCGKTFRWSSNLARHMKNH.

This sequence belongs to the krueppel C2H2-type zinc-finger protein family.

It is found in the nucleus. Transcription regulator required to maintain maternal and paternal gene imprinting, a process by which gene expression is restricted in a parent of origin-specific manner by epigenetic modification of genomic DNA and chromatin, including DNA methylation. Acts by controlling DNA methylation during the earliest multicellular stages of development at multiple imprinting control regions (ICRs). Acts together with ZFP57, but seems to be the major factor in human early embryonic imprinting maintenance. In contrast, in mice, ZFP57 plays the predominant role in imprinting maintenance. The chain is Zinc finger protein 445 from Homo sapiens (Human).